The chain runs to 461 residues: Tubulin gamma chain (461 aa).

142–148 is a GTP binding site; that stretch reads AGGTGSG.

Belongs to the tubulin family.

It is found in the cytoplasm. The protein localises to the cytoskeleton. It localises to the microtubule organizing center. Its subcellular location is the spindle pole body. Its function is as follows. Tubulin is the major constituent of microtubules. The gamma chain is found at microtubule organizing centers (MTOC) such as the spindle poles or the centrosome, suggesting that it is involved in the minus-end nucleation of microtubule assembly. The polypeptide is Tubulin gamma chain (tbg) (Neurospora crassa (strain ATCC 24698 / 74-OR23-1A / CBS 708.71 / DSM 1257 / FGSC 987)).